The primary structure comprises 196 residues: Guanylate kinase (196 aa).

Residues 1-24 (MPVESGAGNDQPKRLTVLSGPSGV) form a disordered region. Positions 13 to 191 (KRLTVLSGPS…VCDELLALIA (179 aa)) constitute a Guanylate kinase-like domain. Residue 20-27 (GPSGVGKS) participates in ATP binding.

Belongs to the guanylate kinase family.

The protein localises to the cytoplasm. The catalysed reaction is GMP + ATP = GDP + ADP. Its function is as follows. Essential for recycling GMP and indirectly, cGMP. This Thermobifida fusca (strain YX) protein is Guanylate kinase.